The sequence spans 117 residues: Large ribosomal subunit protein bL19 (117 aa).

Belongs to the bacterial ribosomal protein bL19 family.

Functionally, this protein is located at the 30S-50S ribosomal subunit interface and may play a role in the structure and function of the aminoacyl-tRNA binding site. This is Large ribosomal subunit protein bL19 from Exiguobacterium sibiricum (strain DSM 17290 / CCUG 55495 / CIP 109462 / JCM 13490 / 255-15).